We begin with the raw amino-acid sequence, 297 residues long: Phosphoribosylaminoimidazole-succinocarboxamide synthase (297 aa).

This sequence belongs to the SAICAR synthetase family.

It catalyses the reaction 5-amino-1-(5-phospho-D-ribosyl)imidazole-4-carboxylate + L-aspartate + ATP = (2S)-2-[5-amino-1-(5-phospho-beta-D-ribosyl)imidazole-4-carboxamido]succinate + ADP + phosphate + 2 H(+). Its pathway is purine metabolism; IMP biosynthesis via de novo pathway; 5-amino-1-(5-phospho-D-ribosyl)imidazole-4-carboxamide from 5-amino-1-(5-phospho-D-ribosyl)imidazole-4-carboxylate: step 1/2. The chain is Phosphoribosylaminoimidazole-succinocarboxamide synthase from Corynebacterium glutamicum (strain ATCC 13032 / DSM 20300 / JCM 1318 / BCRC 11384 / CCUG 27702 / LMG 3730 / NBRC 12168 / NCIMB 10025 / NRRL B-2784 / 534).